The following is a 239-amino-acid chain: Diablo IAP-binding mitochondrial protein (239 aa).

The N-terminal 21 residues, Met-1–Cys-21, are a transit peptide targeting the mitochondrion. The short motif at Ala-56–Ala-60 is the IAP-binding element. The tract at residues Arg-217–Asp-239 is disordered.

This sequence belongs to the Smac/DIABLO protein family. In terms of assembly, homodimer. Interacts with BIRC2/c-IAP1 (via BIR3 domain). Interacts with BIRC6/BRUCE; inhibits BIRC6 activity. Interacts with BIRC7/livin. Interacts with XIAP/BIRC4 (via BIR3 domain). Interacts with the monomeric and dimeric form of BIRC5/survivin. Interacts with AREL1 (via HECT domain); in the cytoplasm following induction of apoptosis. Interacts with BEX3. Post-translationally, ubiquitinated by BIRC7/livin. Ubiquitinated by BIRC6. The precursor form is proteolytically cleaved by mitochondrial processing peptidase MPP to remove the transit peptide and produce an intermediate form. This is then processed by PARL to produce the mature cleaved form which is released from mitochondria into the cytosol in apoptotic cells. Ubiquitously expressed with highest expression in testis. Expression is also high in heart, liver, kidney, spleen, prostate and ovary. Low in brain, lung, thymus and peripheral blood leukocytes. Isoform 3 is ubiquitously expressed.

Its subcellular location is the mitochondrion. It is found in the cytoplasm. The protein resides in the cytosol. Its function is as follows. Promotes apoptosis by activating caspases in the cytochrome c/Apaf-1/caspase-9 pathway. Acts by opposing the inhibitory activity of inhibitor of apoptosis proteins (IAP). Inhibits the activity of BIRC6/BRUCE by inhibiting its binding to caspases. Attenuates the stability and apoptosis-inhibiting activity of XIAP/BIRC4 by promoting XIAP/BIRC4 ubiquitination and degradation through the ubiquitin-proteasome pathway. Also disrupts XIAP/BIRC4 interacting with processed caspase-9 and promotes caspase-3 activation. Functionally, defective in the capacity to down-regulate the XIAP/BIRC4 abundance. The sequence is that of Diablo IAP-binding mitochondrial protein from Homo sapiens (Human).